The following is a 314-amino-acid chain: Ribose-phosphate pyrophosphokinase (314 aa).

ATP-binding positions include 37–39 (DGE) and 96–97 (RQ). Residues His131 and Asp170 each coordinate Mg(2+). Lys194 is a catalytic residue. Residues Arg196, Asp220, and 224–228 (DTGGT) contribute to the D-ribose 5-phosphate site.

Belongs to the ribose-phosphate pyrophosphokinase family. Class I subfamily. Homohexamer. Requires Mg(2+) as cofactor.

The protein resides in the cytoplasm. It carries out the reaction D-ribose 5-phosphate + ATP = 5-phospho-alpha-D-ribose 1-diphosphate + AMP + H(+). Its pathway is metabolic intermediate biosynthesis; 5-phospho-alpha-D-ribose 1-diphosphate biosynthesis; 5-phospho-alpha-D-ribose 1-diphosphate from D-ribose 5-phosphate (route I): step 1/1. Involved in the biosynthesis of the central metabolite phospho-alpha-D-ribosyl-1-pyrophosphate (PRPP) via the transfer of pyrophosphoryl group from ATP to 1-hydroxyl of ribose-5-phosphate (Rib-5-P). The sequence is that of Ribose-phosphate pyrophosphokinase from Vibrio vulnificus (strain CMCP6).